A 507-amino-acid chain; its full sequence is RNA-splicing ligase RtcB homolog (507 aa).

Mn(2+)-binding residues include D121, C124, H229, H261, and H355. A GMP-binding site is contributed by 228-232; sequence NHYAE. GMP contacts are provided by residues 355–356, 404–407, S411, 430–433, and K506; these read HN, GGTM, and HGAG. The active-site GMP-histidine intermediate is H430.

The protein belongs to the RtcB family. Catalytic component of the tRNA-splicing ligase complex. Requires Mn(2+) as cofactor.

The enzyme catalyses a 3'-end 3'-phospho-ribonucleotide-RNA + a 5'-end dephospho-ribonucleoside-RNA + GTP = a ribonucleotidyl-ribonucleotide-RNA + GMP + diphosphate. It carries out the reaction a 3'-end 2',3'-cyclophospho-ribonucleotide-RNA + a 5'-end dephospho-ribonucleoside-RNA + GTP + H2O = a ribonucleotidyl-ribonucleotide-RNA + GMP + diphosphate + H(+). Catalytic subunit of the tRNA-splicing ligase complex that acts by directly joining spliced tRNA halves to mature-sized tRNAs by incorporating the precursor-derived splice junction phosphate into the mature tRNA as a canonical 3',5'-phosphodiester. May act as an RNA ligase with broad substrate specificity, and may function toward other RNAs. The sequence is that of RNA-splicing ligase RtcB homolog from Branchiostoma floridae (Florida lancelet).